The primary structure comprises 140 residues: Nucleoside diphosphate kinase (140 aa).

ATP contacts are provided by Lys11, Phe59, Arg87, Thr93, Arg104, and Asn114. Residue His117 is the Pros-phosphohistidine intermediate of the active site.

This sequence belongs to the NDK family. Homotetramer. It depends on Mg(2+) as a cofactor.

Its subcellular location is the cytoplasm. It catalyses the reaction a 2'-deoxyribonucleoside 5'-diphosphate + ATP = a 2'-deoxyribonucleoside 5'-triphosphate + ADP. The enzyme catalyses a ribonucleoside 5'-diphosphate + ATP = a ribonucleoside 5'-triphosphate + ADP. In terms of biological role, major role in the synthesis of nucleoside triphosphates other than ATP. The ATP gamma phosphate is transferred to the NDP beta phosphate via a ping-pong mechanism, using a phosphorylated active-site intermediate. In Rickettsia typhi (strain ATCC VR-144 / Wilmington), this protein is Nucleoside diphosphate kinase.